A 504-amino-acid chain; its full sequence is 6,7,8-trihydroxycoumarin synthase (504 aa).

The chain crosses the membrane as a helical span at residues 1-21; sequence MEPVFLFLILAFPIASVYLLF. Positions 363–368 are substrate specificity; it reads PAPVLV. Cys444 contacts heme.

It belongs to the cytochrome P450 family. Heme serves as cofactor.

Its subcellular location is the microsome membrane. Its pathway is secondary metabolite biosynthesis. Functionally, involved in the biosynthesis of coumarins and furanocoumarins (FCs), natural products required for defense responses against attacks by predators with potential medical and agroindustrial usages such as anticoagulant, rodenticide and artificial vanilla substitutes. Able to catalyze the hydroxylation of esculetin to produce 6,7,8-trihydroxycoumarin. The chain is 6,7,8-trihydroxycoumarin synthase from Pastinaca sativa (Wild parsnip).